A 182-amino-acid polypeptide reads, in one-letter code: Large ribosomal subunit protein uL5m (182 aa).

Belongs to the universal ribosomal protein uL5 family.

It is found in the mitochondrion. The polypeptide is Large ribosomal subunit protein uL5m (RPL5) (Reclinomonas americana).